The sequence spans 587 residues: MKDTIRQLIQQALDQLTADGTLPAGLTPDIQVENTKDRSHGDFASNIAMMLAKPAGMKPRDLAARLVEAIPAHEQLAKVEIAGPGFLNFFQDHVWLAASLDRALADERLGVRKAGPAQRVVIDLSSPNLAKEMHVGHLRSTIIGDAVARVLEFLGDTVIRQNHVGDWGTQFGMLLAYLEEQPVDAEAELHDLEVFYRAAKKRFDESPEFADRARELVVKLQAGDPDCLRLWTRFNEISLSHCQKVYDRLGVKLSMADVMGESAYNDDLAQVVADLTAKGLLTEDNGALCVFLEEFKNAEGNPLPVIVQKAGGGYLYATTDLAAMRYRHNVLHADRVLYFVDQRQALHFQQVFEVARRAGFVPAGMELEHMGFGTMNGADGRPFKTRDGGTVKLIDLLEEAESRAYALVKERNEQRAERGEEPFDEVQLREIGRVVGIDSVKYADLSKHRTSDYSFNFELMLSFEGNTAPYLLYACTRVASVFRKLGQGREQLGGKIVLEQPQELALAAQLAQFGDLINNVALKGVPHLLCAYLYELAGLFSSFYEHCPILTAEDPAQKDSRLRLAALTGRTLEQGLELLGLKTLERM.

Residues 127-137 carry the 'HIGH' region motif; sequence PNLAKEMHVGH.

This sequence belongs to the class-I aminoacyl-tRNA synthetase family. In terms of assembly, monomer.

The protein resides in the cytoplasm. The enzyme catalyses tRNA(Arg) + L-arginine + ATP = L-arginyl-tRNA(Arg) + AMP + diphosphate. This chain is Arginine--tRNA ligase, found in Pseudomonas aeruginosa (strain ATCC 15692 / DSM 22644 / CIP 104116 / JCM 14847 / LMG 12228 / 1C / PRS 101 / PAO1).